We begin with the raw amino-acid sequence, 354 residues long: Uroporphyrinogen decarboxylase (354 aa).

Substrate contacts are provided by residues 27-31, Asp77, Tyr154, Thr209, and His327; that span reads RQAGR.

This sequence belongs to the uroporphyrinogen decarboxylase family. In terms of assembly, homodimer.

It is found in the cytoplasm. It catalyses the reaction uroporphyrinogen III + 4 H(+) = coproporphyrinogen III + 4 CO2. The protein operates within porphyrin-containing compound metabolism; protoporphyrin-IX biosynthesis; coproporphyrinogen-III from 5-aminolevulinate: step 4/4. Catalyzes the decarboxylation of four acetate groups of uroporphyrinogen-III to yield coproporphyrinogen-III. This is Uroporphyrinogen decarboxylase from Histophilus somni (strain 129Pt) (Haemophilus somnus).